The sequence spans 514 residues: ATP synthase subunit alpha (514 aa).

Residue Gly-170–Thr-177 participates in ATP binding.

It belongs to the ATPase alpha/beta chains family. As to quaternary structure, F-type ATPases have 2 components, CF(1) - the catalytic core - and CF(0) - the membrane proton channel. CF(1) has five subunits: alpha(3), beta(3), gamma(1), delta(1), epsilon(1). CF(0) has three main subunits: a(1), b(2) and c(9-12). The alpha and beta chains form an alternating ring which encloses part of the gamma chain. CF(1) is attached to CF(0) by a central stalk formed by the gamma and epsilon chains, while a peripheral stalk is formed by the delta and b chains.

It localises to the cell inner membrane. It catalyses the reaction ATP + H2O + 4 H(+)(in) = ADP + phosphate + 5 H(+)(out). Functionally, produces ATP from ADP in the presence of a proton gradient across the membrane. The alpha chain is a regulatory subunit. The protein is ATP synthase subunit alpha of Acinetobacter baumannii (strain AB307-0294).